Consider the following 2383-residue polypeptide: Highly reducing polyketide synthase SAT13 (2383 aa).

Residues 6–433 (PVPLAIVGIA…GTNAHAVLER (428 aa)) enclose the Ketosynthase family 3 (KS3) domain. Residues cysteine 180, histidine 315, and histidine 355 each act as for beta-ketoacyl synthase activity in the active site. A malonyl-CoA:ACP transacylase (MAT) domain region spans residues 536-828 (FIFTGQGAQW…IGPHSALAGP (293 aa)). Serine 626 serves as the catalytic For malonyltransferase activity. The tract at residues 922–1062 (HDLLGLRMTE…GNIVVVFKTS (141 aa)) is N-terminal hotdog fold. The tract at residues 922 to 1239 (HDLLGLRMTE…GMELRSFVAR (318 aa)) is dehydratase (DH) domain. The PKS/mFAS DH domain occupies 922 to 1242 (HDLLGLRMTE…LRSFVARDSN (321 aa)). The active-site Proton acceptor; for dehydratase activity is the histidine 954. The segment at 1087-1242 (GKLTHAGQLY…LRSFVARDSN (156 aa)) is C-terminal hotdog fold. The Proton donor; for dehydratase activity role is filled by aspartate 1152. An enoylreductase (ER) domain region spans residues 1669–1977 (DGQNRLVFVE…KQGSMKKCVL (309 aa)). The segment at 2001–2184 (ATYVVAGGLG…MSLNIGGIKD (184 aa)) is catalytic ketoreductase (KRc) domain. The region spanning 2287 to 2364 (EISEFVARSI…DLAQKVVSRS (78 aa)) is the Carrier domain. Serine 2324 is subject to O-(pantetheine 4'-phosphoryl)serine.

The protein operates within mycotoxin biosynthesis. Its function is as follows. Highly reducing polyketide synthase; part of the satratoxin SC2 cluster involved in the biosynthesis of satratoxins, trichothecene mycotoxins that are associated with human food poisonings. Satratoxins are suggested to be made by products of multiple gene clusters (SC1, SC2 and SC3) that encode 21 proteins in all, including polyketide synthases, acetyltransferases, and other enzymes expected to modify the trichothecene skeleton. SC1 encodes 10 proteins, SAT1 to SAT10. The largest are SAT8, which encodes a putative polyketide synthase (PKS) with a conventional non-reducing architecture, and SAT10, a putative protein containing four ankyrin repeats and thus may be involved in protein scaffolding. The putative short-chain reductase SAT3 may assist the PKS in some capacity. SAT6 contains a secretory lipase domain and acts probably as a trichothecene esterase. SAT5 encodes a putative acetyltransferase, and so, with SAT6, may affect endogenous protection from toxicity. The probable transcription factor SAT9 may regulate the expression of the SC1 cluster. SC2 encodes proteins SAT11 to SAT16, the largest of which encodes the putative reducing PKS SAT13. SAT11 is a cytochrome P450 monooxygenase, while SAT14 and SAT16 are probable acetyltransferases. The SC2 cluster may be regulated by the transcription factor SAT15. SC3 is a small cluster that encodes 5 proteins, SAT17 to SAT21. SAT21 is a putative MFS-type transporter which may have a role in exporting secondary metabolites. The four other proteins putatively encoded in SC3 include the taurine hydroxylase-like protein SAT17, the O-methyltransferase SAT18, the acetyltransferase SAT19, and the Cys6-type zinc finger SAT20, the latter being probably involved in regulation of SC3 expression. This chain is Highly reducing polyketide synthase SAT13, found in Stachybotrys chartarum (strain CBS 109288 / IBT 7711) (Toxic black mold).